Here is a 78-residue protein sequence, read N- to C-terminus: Small ribosomal subunit protein bS18 (78 aa).

This sequence belongs to the bacterial ribosomal protein bS18 family. As to quaternary structure, part of the 30S ribosomal subunit. Forms a tight heterodimer with protein bS6.

Binds as a heterodimer with protein bS6 to the central domain of the 16S rRNA, where it helps stabilize the platform of the 30S subunit. This Frankia casuarinae (strain DSM 45818 / CECT 9043 / HFP020203 / CcI3) protein is Small ribosomal subunit protein bS18.